A 253-amino-acid polypeptide reads, in one-letter code: LexA repressor (253 aa).

A disordered region spans residues 1–34; that stretch reads MAIEKKPAGARGSRGSRTVKTLPNGKPDPASLSD. Positions 56 to 76 form a DNA-binding region, H-T-H motif; sequence IREIGDAAGLQSTSSVAYQLK. The span at 82–106 shows a compositional bias: basic and acidic residues; sequence GFLRRDPNKPRAVDVRHLPETESRS. Residues 82–127 form a disordered region; the sequence is GFLRRDPNKPRAVDVRHLPETESRSSKAATQAKSKAPQAGAHDPEL. A compositionally biased stretch (low complexity) spans 107–120; the sequence is SKAATQAKSKAPQA. Catalysis depends on for autocatalytic cleavage activity residues Ser177 and Lys214.

It belongs to the peptidase S24 family. As to quaternary structure, homodimer.

It carries out the reaction Hydrolysis of Ala-|-Gly bond in repressor LexA.. Functionally, represses a number of genes involved in the response to DNA damage (SOS response), including recA and lexA. In the presence of single-stranded DNA, RecA interacts with LexA causing an autocatalytic cleavage which disrupts the DNA-binding part of LexA, leading to derepression of the SOS regulon and eventually DNA repair. The protein is LexA repressor of Corynebacterium glutamicum (strain R).